We begin with the raw amino-acid sequence, 332 residues long: UPF0158 protein TC_0713 (332 aa).

Disordered stretches follow at residues 196–215 (ALNP…KVEA) and 291–332 (LGYD…KARS). Over residues 295–316 (GDGDASDFFGEEYDDDDDDDDD) the composition is skewed to acidic residues. The segment covering 320 to 332 (KKAAKRGRKKARS) has biased composition (basic residues).

This sequence belongs to the UPF0158 family.

This Chlamydia muridarum (strain MoPn / Nigg) protein is UPF0158 protein TC_0713.